Reading from the N-terminus, the 290-residue chain is Pyridoxal kinase PdxY (290 aa).

Substrate contacts are provided by residues S12 and 47–48 (TQ). ATP contacts are provided by residues D114, E151, K184, and 211-214 (RPLL). Residue D225 participates in substrate binding.

Belongs to the pyridoxine kinase family. PdxY subfamily. Homodimer. Requires Mg(2+) as cofactor.

It carries out the reaction pyridoxal + ATP = pyridoxal 5'-phosphate + ADP + H(+). It functions in the pathway cofactor metabolism; pyridoxal 5'-phosphate salvage; pyridoxal 5'-phosphate from pyridoxal: step 1/1. Pyridoxal kinase involved in the salvage pathway of pyridoxal 5'-phosphate (PLP). Catalyzes the phosphorylation of pyridoxal to PLP. The chain is Pyridoxal kinase PdxY from Pseudomonas entomophila (strain L48).